A 273-amino-acid polypeptide reads, in one-letter code: 4-hydroxy-tetrahydrodipicolinate reductase (273 aa).

NAD(+)-binding positions include 12–17 (GAGGRM) and glutamate 38. Residue arginine 39 coordinates NADP(+). NAD(+)-binding positions include 102–104 (GTT) and 126–129 (AANF). Residue histidine 159 is the Proton donor/acceptor of the active site. Residue histidine 160 participates in (S)-2,3,4,5-tetrahydrodipicolinate binding. The active-site Proton donor is lysine 163. A (S)-2,3,4,5-tetrahydrodipicolinate-binding site is contributed by 169-170 (GT).

This sequence belongs to the DapB family. Homotetramer.

Its subcellular location is the cytoplasm. The enzyme catalyses (S)-2,3,4,5-tetrahydrodipicolinate + NAD(+) + H2O = (2S,4S)-4-hydroxy-2,3,4,5-tetrahydrodipicolinate + NADH + H(+). The catalysed reaction is (S)-2,3,4,5-tetrahydrodipicolinate + NADP(+) + H2O = (2S,4S)-4-hydroxy-2,3,4,5-tetrahydrodipicolinate + NADPH + H(+). It participates in amino-acid biosynthesis; L-lysine biosynthesis via DAP pathway; (S)-tetrahydrodipicolinate from L-aspartate: step 4/4. Functionally, catalyzes the conversion of 4-hydroxy-tetrahydrodipicolinate (HTPA) to tetrahydrodipicolinate. The sequence is that of 4-hydroxy-tetrahydrodipicolinate reductase from Salmonella enteritidis PT4 (strain P125109).